The sequence spans 430 residues: Adenylosuccinate synthetase (430 aa).

GTP is bound by residues 13–19 (GDEGKGK) and 41–43 (GHT). Asp-14 functions as the Proton acceptor in the catalytic mechanism. 2 residues coordinate Mg(2+): Asp-14 and Gly-41. IMP-binding positions include 14 to 17 (DEGK), 39 to 42 (NAGH), Thr-130, Arg-144, Gln-225, Thr-240, and Arg-304. His-42 serves as the catalytic Proton donor. Position 300 to 306 (300 to 306 (ATTGRAR)) interacts with substrate. GTP contacts are provided by residues Arg-306, 332 to 334 (KLD), and 414 to 416 (STG).

The protein belongs to the adenylosuccinate synthetase family. Homodimer. It depends on Mg(2+) as a cofactor.

Its subcellular location is the cytoplasm. It carries out the reaction IMP + L-aspartate + GTP = N(6)-(1,2-dicarboxyethyl)-AMP + GDP + phosphate + 2 H(+). The protein operates within purine metabolism; AMP biosynthesis via de novo pathway; AMP from IMP: step 1/2. Plays an important role in the de novo pathway of purine nucleotide biosynthesis. Catalyzes the first committed step in the biosynthesis of AMP from IMP. The sequence is that of Adenylosuccinate synthetase from Pseudomonas aeruginosa (strain LESB58).